The sequence spans 308 residues: 4-hydroxy-3-methylbut-2-enyl diphosphate reductase (308 aa).

Cys12 contributes to the [4Fe-4S] cluster binding site. (2E)-4-hydroxy-3-methylbut-2-enyl diphosphate-binding residues include His43 and His77. Residues His43 and His77 each coordinate dimethylallyl diphosphate. The isopentenyl diphosphate site is built by His43 and His77. Residue Cys99 participates in [4Fe-4S] cluster binding. Position 127 (His127) interacts with (2E)-4-hydroxy-3-methylbut-2-enyl diphosphate. His127 is a binding site for dimethylallyl diphosphate. Isopentenyl diphosphate is bound at residue His127. Glu129 (proton donor) is an active-site residue. Thr167 provides a ligand contact to (2E)-4-hydroxy-3-methylbut-2-enyl diphosphate. Position 197 (Cys197) interacts with [4Fe-4S] cluster. Residues Ser225, Ser226, Asn227, and Ser269 each contribute to the (2E)-4-hydroxy-3-methylbut-2-enyl diphosphate site. The dimethylallyl diphosphate site is built by Ser225, Ser226, Asn227, and Ser269. Residues Ser225, Ser226, Asn227, and Ser269 each contribute to the isopentenyl diphosphate site.

The protein belongs to the IspH family. [4Fe-4S] cluster serves as cofactor.

The enzyme catalyses isopentenyl diphosphate + 2 oxidized [2Fe-2S]-[ferredoxin] + H2O = (2E)-4-hydroxy-3-methylbut-2-enyl diphosphate + 2 reduced [2Fe-2S]-[ferredoxin] + 2 H(+). It carries out the reaction dimethylallyl diphosphate + 2 oxidized [2Fe-2S]-[ferredoxin] + H2O = (2E)-4-hydroxy-3-methylbut-2-enyl diphosphate + 2 reduced [2Fe-2S]-[ferredoxin] + 2 H(+). It participates in isoprenoid biosynthesis; dimethylallyl diphosphate biosynthesis; dimethylallyl diphosphate from (2E)-4-hydroxy-3-methylbutenyl diphosphate: step 1/1. It functions in the pathway isoprenoid biosynthesis; isopentenyl diphosphate biosynthesis via DXP pathway; isopentenyl diphosphate from 1-deoxy-D-xylulose 5-phosphate: step 6/6. Its function is as follows. Catalyzes the conversion of 1-hydroxy-2-methyl-2-(E)-butenyl 4-diphosphate (HMBPP) into a mixture of isopentenyl diphosphate (IPP) and dimethylallyl diphosphate (DMAPP). Acts in the terminal step of the DOXP/MEP pathway for isoprenoid precursor biosynthesis. This is 4-hydroxy-3-methylbut-2-enyl diphosphate reductase from Wolbachia pipientis subsp. Culex pipiens (strain wPip).